A 148-amino-acid chain; its full sequence is Large ribosomal subunit protein uL11 (148 aa).

The interval 89 to 108 is disordered; the sequence is EKKKGSGAHKPGKEKVGQVT.

It belongs to the universal ribosomal protein uL11 family. As to quaternary structure, part of the ribosomal stalk of the 50S ribosomal subunit. Interacts with L10 and the large rRNA to form the base of the stalk. L10 forms an elongated spine to which L12 dimers bind in a sequential fashion forming a multimeric L10(L12)X complex. One or more lysine residues are methylated.

Its function is as follows. Forms part of the ribosomal stalk which helps the ribosome interact with GTP-bound translation factors. The polypeptide is Large ribosomal subunit protein uL11 (Anaeromyxobacter sp. (strain Fw109-5)).